Reading from the N-terminus, the 169-residue chain is Inorganic pyrophosphatase (169 aa).

K26, R40, and Y52 together coordinate substrate. Residues D62, D67, and D99 each coordinate Mg(2+). Y138 contacts substrate.

Belongs to the PPase family. In terms of assembly, homohexamer. The cofactor is Mg(2+).

The protein localises to the cytoplasm. It catalyses the reaction diphosphate + H2O = 2 phosphate + H(+). Its function is as follows. Catalyzes the hydrolysis of inorganic pyrophosphate (PPi) forming two phosphate ions. The sequence is that of Inorganic pyrophosphatase from Thermoplasma volcanium (strain ATCC 51530 / DSM 4299 / JCM 9571 / NBRC 15438 / GSS1).